Here is a 374-residue protein sequence, read N- to C-terminus: Histone acetyltransferase type B catalytic subunit (374 aa).

2 interaction with histone H4 N-terminus regions span residues Asp-42–Glu-44 and Tyr-194–Tyr-196. Residues Val-135–Glu-303 form the N-acetyltransferase domain. Residues Trp-197–Phe-205 are interaction with HAT2. Acetyl-CoA is bound by residues Phe-220–Ile-222 and Gln-227–Ser-233. Glu-255 acts as the Proton donor/acceptor in catalysis. Acetyl-CoA contacts are provided by Asn-258 and Arg-267. The residue at position 354 (Ser-354) is a Phosphoserine.

Belongs to the HAT1 family. As to quaternary structure, component of the HAT-B complex composed of at least HAT1 and HAT2. In the cytoplasm, this complex binds to the histone H4 tail. In the nucleus, the HAT-B complex has an additional component, the histone H3/H4 chaperone HIF1.

The protein localises to the cytoplasm. It localises to the nucleus. The catalysed reaction is L-lysyl-[protein] + acetyl-CoA = N(6)-acetyl-L-lysyl-[protein] + CoA + H(+). Catalytic component of the histone acetylase B (HAT-B) complex. Acetylates 'Lys-12' of free histone H4 in the cytoplasm. The complex is also found in the nucleus, however it is not certain that it modifies histone H4 when packaged in chromatin. Histone H4 'Lys-12' acetylation is required for telomeric silencing. Has intrinsic substrate specificity that modifies lysine in recognition sequence GXGKXG. Involved in DNA double-strand break repair. The chain is Histone acetyltransferase type B catalytic subunit (HAT1) from Saccharomyces cerevisiae (strain ATCC 204508 / S288c) (Baker's yeast).